The sequence spans 373 residues: Cytoplasmic tRNA 2-thiolation protein 1 (373 aa).

The protein belongs to the TtcA family. CTU1/NCS6/ATPBD3 subfamily.

It is found in the cytoplasm. Its pathway is tRNA modification; 5-methoxycarbonylmethyl-2-thiouridine-tRNA biosynthesis. In terms of biological role, plays a central role in 2-thiolation of mcm(5)S(2)U at tRNA wobble positions of tRNA(Lys), tRNA(Glu) and tRNA(Gln). Directly binds tRNAs and probably acts by catalyzing adenylation of tRNAs, an intermediate required for 2-thiolation. It is unclear whether it acts as a sulfurtransferase that transfers sulfur from thiocarboxylated URM1 onto the uridine of tRNAs at wobble position. Prior mcm(5) tRNA modification by the elongator complex is required for 2-thiolation. May also be involved in protein urmylation. This Malassezia globosa (strain ATCC MYA-4612 / CBS 7966) (Dandruff-associated fungus) protein is Cytoplasmic tRNA 2-thiolation protein 1.